A 240-amino-acid chain; its full sequence is Eukaryotic translation initiation factor 3 subunit K (240 aa).

The 181-residue stretch at 41–221 folds into the PCI domain; sequence YDKDIVLTIL…TIKTRNIDEK (181 aa).

The protein belongs to the eIF-3 subunit K family. In terms of assembly, component of the eukaryotic translation initiation factor 3 (eIF-3) complex.

The protein resides in the cytoplasm. In terms of biological role, component of the eukaryotic translation initiation factor 3 (eIF-3) complex, which is involved in protein synthesis of a specialized repertoire of mRNAs and, together with other initiation factors, stimulates binding of mRNA and methionyl-tRNAi to the 40S ribosome. The eIF-3 complex specifically targets and initiates translation of a subset of mRNAs involved in cell proliferation. In Caenorhabditis elegans, this protein is Eukaryotic translation initiation factor 3 subunit K.